The sequence spans 547 residues: Probable terpene synthase 3 (547 aa).

Residues Asp298, Asp302, and Glu451 each contribute to the Mg(2+) site. The short motif at 298–302 (DDIYD) is the DDXXD motif element.

The protein belongs to the terpene synthase family. Mg(2+) serves as cofactor.

In terms of biological role, probable sesquiterpene synthase. This Ricinus communis (Castor bean) protein is Probable terpene synthase 3 (TPS3).